A 376-amino-acid chain; its full sequence is Anhydro-N-acetylmuramic acid kinase (376 aa).

ATP is bound at residue 11–18 (GTSMDGVD).

It belongs to the anhydro-N-acetylmuramic acid kinase family.

It catalyses the reaction 1,6-anhydro-N-acetyl-beta-muramate + ATP + H2O = N-acetyl-D-muramate 6-phosphate + ADP + H(+). It participates in amino-sugar metabolism; 1,6-anhydro-N-acetylmuramate degradation. Its pathway is cell wall biogenesis; peptidoglycan recycling. In terms of biological role, catalyzes the specific phosphorylation of 1,6-anhydro-N-acetylmuramic acid (anhMurNAc) with the simultaneous cleavage of the 1,6-anhydro ring, generating MurNAc-6-P. Is required for the utilization of anhMurNAc either imported from the medium or derived from its own cell wall murein, and thus plays a role in cell wall recycling. The polypeptide is Anhydro-N-acetylmuramic acid kinase (Acinetobacter baylyi (strain ATCC 33305 / BD413 / ADP1)).